We begin with the raw amino-acid sequence, 137 residues long: Large ribosomal subunit protein uL16 (137 aa).

This sequence belongs to the universal ribosomal protein uL16 family. Part of the 50S ribosomal subunit.

In terms of biological role, binds 23S rRNA and is also seen to make contacts with the A and possibly P site tRNAs. The chain is Large ribosomal subunit protein uL16 from Xanthomonas axonopodis pv. citri (strain 306).